We begin with the raw amino-acid sequence, 558 residues long: Formate--tetrahydrofolate ligase (558 aa).

66–73 (TPAGEGKT) serves as a coordination point for ATP.

Belongs to the formate--tetrahydrofolate ligase family.

It catalyses the reaction (6S)-5,6,7,8-tetrahydrofolate + formate + ATP = (6R)-10-formyltetrahydrofolate + ADP + phosphate. It participates in one-carbon metabolism; tetrahydrofolate interconversion. This chain is Formate--tetrahydrofolate ligase, found in Clostridium kluyveri (strain NBRC 12016).